Reading from the N-terminus, the 122-residue chain is Small ribosomal subunit protein uS13 (122 aa).

The segment at 95 to 122 (GLPVHGQRTHTNARTRKGPRRGAVGKKK) is disordered.

This sequence belongs to the universal ribosomal protein uS13 family. As to quaternary structure, part of the 30S ribosomal subunit. Forms a loose heterodimer with protein S19. Forms two bridges to the 50S subunit in the 70S ribosome.

Located at the top of the head of the 30S subunit, it contacts several helices of the 16S rRNA. In the 70S ribosome it contacts the 23S rRNA (bridge B1a) and protein L5 of the 50S subunit (bridge B1b), connecting the 2 subunits; these bridges are implicated in subunit movement. Contacts the tRNAs in the A and P-sites. The sequence is that of Small ribosomal subunit protein uS13 from Desulfovibrio desulfuricans (strain ATCC 27774 / DSM 6949 / MB).